Here is a 658-residue protein sequence, read N- to C-terminus: Carnitine O-palmitoyltransferase 2, mitochondrial (658 aa).

A mitochondrion-targeting transit peptide spans 1–25 (MMPRLLLRDWPRCPSLVLGAPSRPL). Residues 26 to 178 (SAVSGPAEYL…GLLEPEVFHL (153 aa)) are Mitochondrial matrix-facing. An N6-succinyllysine modification is found at Lys69. Lys79 bears the N6-acetyllysine mark. The residue at position 85 (Lys85) is an N6-succinyllysine. Positions 179-208 (NPARSDTDAFKRLIRFVPSSLSWYGAYLVN) form an intramembrane region, note=Mitochondrial inner membrane. At 209–658 (AYPLDMSQYF…DALEGKAIKT (450 aa)) the chain is on the mitochondrial matrix side. Lys239 is subject to N6-acetyllysine; alternate. N6-succinyllysine; alternate is present on Lys239. Residue Lys305 is modified to N6-acetyllysine. Residue His372 is the Proton acceptor of the active site. Lys418 is subject to N6-acetyllysine; alternate. Position 418 is an N6-succinyllysine; alternate (Lys418). N6-succinyllysine occurs at positions 424 and 439. A CoA-binding site is contributed by 452–464 (GKEFLKKKKLSPD). Tyr486, Ser488, and Thr499 together coordinate (R)-carnitine. N6-acetyllysine; alternate is present on residues Lys510 and Lys544. Residues Lys510 and Lys544 each carry the N6-succinyllysine; alternate modification.

This sequence belongs to the carnitine/choline acetyltransferase family.

It is found in the mitochondrion inner membrane. It catalyses the reaction (R)-carnitine + hexadecanoyl-CoA = O-hexadecanoyl-(R)-carnitine + CoA. The catalysed reaction is octanoyl-CoA + (R)-carnitine = O-octanoyl-(R)-carnitine + CoA. It carries out the reaction decanoyl-CoA + (R)-carnitine = O-decanoyl-(R)-carnitine + CoA. The enzyme catalyses dodecanoyl-CoA + (R)-carnitine = O-dodecanoyl-R-carnitine + CoA. It catalyses the reaction tetradecanoyl-CoA + (R)-carnitine = O-tetradecanoyl-(R)-carnitine + CoA. The catalysed reaction is (R)-carnitine + octadecanoyl-CoA = O-octadecanoyl-(R)-carnitine + CoA. It carries out the reaction eicosanoyl-CoA + (R)-carnitine = O-eicosanoyl-(R)-carnitine + CoA. The enzyme catalyses (9Z)-tetradecenoyl-CoA + (R)-carnitine = O-(9Z)-tetradecenoyl-(R)-carnitine + CoA. It catalyses the reaction (5Z)-tetradecenoyl-CoA + (R)-carnitine = O-(5Z)-tetradecenoyl-(R)-carnitine + CoA. The catalysed reaction is (R)-carnitine + (9Z)-octadecenoyl-CoA = O-(9Z)-octadecenoyl-(R)-carnitine + CoA. It carries out the reaction 4,8-dimethylnonanoyl-CoA + (R)-carnitine = O-4,8-dimethylnonanoyl-(R)-carnitine + CoA. Its pathway is lipid metabolism; fatty acid beta-oxidation. In terms of biological role, involved in the intramitochondrial synthesis of acylcarnitines from accumulated acyl-CoA metabolites. Reconverts acylcarnitines back into the respective acyl-CoA esters that can then undergo beta-oxidation, an essential step for the mitochondrial uptake of long-chain fatty acids and their subsequent beta-oxidation in the mitochondrion. Active with medium (C8-C12) and long-chain (C14-C18) acyl-CoA esters. The polypeptide is Carnitine O-palmitoyltransferase 2, mitochondrial (Mus musculus (Mouse)).